Consider the following 460-residue polypeptide: Elongation factor 1-alpha (460 aa).

The residue at position 2 (glycine 2) is a N,N,N-trimethylglycine. Lysine 3 is modified (N6,N6-dimethyllysine; alternate). An N6-methyllysine; alternate modification is found at lysine 3. Residues 6–241 (KQHINIVVIG…DAIEPPVRPT (236 aa)) form the tr-type G domain. The G1 stretch occupies residues 15–22 (GHVDSGKS). 15–22 (GHVDSGKS) contributes to the GTP binding site. Lysine 31 carries the post-translational modification N6-methyllysine. The interval 71–75 (GITID) is G2. Lysine 80 is modified (N6,N6,N6-trimethyllysine). The tract at residues 92 to 95 (DAPG) is G3. GTP contacts are provided by residues 92–96 (DAPGH) and 154–157 (NKMD). The G4 stretch occupies residues 154-157 (NKMD). The G5 stretch occupies residues 193–195 (SGF). The residue at position 317 (lysine 317) is an N6,N6-dimethyllysine; alternate. Position 317 is an N6-methyllysine; alternate (lysine 317). At lysine 391 the chain carries N6-methyllysine.

It belongs to the TRAFAC class translation factor GTPase superfamily. Classic translation factor GTPase family. EF-Tu/EF-1A subfamily.

It is found in the cytoplasm. Its function is as follows. This protein promotes the GTP-dependent binding of aminoacyl-tRNA to the A-site of ribosomes during protein biosynthesis. This chain is Elongation factor 1-alpha (tef1), found in Aspergillus oryzae (strain ATCC 42149 / RIB 40) (Yellow koji mold).